A 604-amino-acid chain; its full sequence is Baculoviral IAP repeat-containing protein 3 (604 aa).

3 BIR repeats span residues Glu-29 to Val-96, Glu-169 to Ile-235, and His-255 to Leu-322. Cys-292, Cys-295, His-312, and Cys-319 together coordinate Zn(2+). The 91-residue stretch at Lys-439–Gln-529 folds into the CARD domain. Residues Cys-557–Arg-592 form an RING-type zinc finger.

Belongs to the IAP family. Interacts with PRSS25; interaction inhibits apoptotic suppressor activity. The BIR motifs region interacts with TNF receptor associated factors 1 and 2 (TRAF1 and TRAF2) to form a heteromeric complex, which is then recruited to the tumor necrosis factor receptor 2 (TNFR2). Interaction with TRAF2 is required for ubiquitination of IKBKE, degradation of NFKBIA and activation of NF-kappa-B. Interacts with RIP1, RIP2, RIP3, RIP4 and USP19. Post-translationally, auto-ubiquitinated and degraded by the proteasome in apoptotic cells. As to expression, highly expressed in fetal lung, and kidney. In the adult, expression is mainly seen in lymphoid tissues, including spleen, thymus and peripheral blood lymphocytes.

Its subcellular location is the cytoplasm. It localises to the nucleus. It catalyses the reaction S-ubiquitinyl-[E2 ubiquitin-conjugating enzyme]-L-cysteine + [acceptor protein]-L-lysine = [E2 ubiquitin-conjugating enzyme]-L-cysteine + N(6)-ubiquitinyl-[acceptor protein]-L-lysine.. Its activity is regulated as follows. USP19 regulates the stability of BIRC3/c-IAP2 by preventing its ubiquitination. In terms of biological role, multi-functional protein which regulates not only caspases and apoptosis, but also modulates inflammatory signaling and immunity, mitogenic kinase signaling and cell proliferation, as well as cell invasion and metastasis. Acts as an E3 ubiquitin-protein ligase regulating NF-kappa-B signaling and regulates both canonical and non-canonical NF-kappa-B signaling by acting in opposite directions: acts as a positive regulator of the canonical pathway and suppresses constitutive activation of non-canonical NF-kappa-B signaling. The target proteins for its E3 ubiquitin-protein ligase activity include: RIPK1, RIPK2, RIPK3, RIPK4, CASP3, CASP7, CASP8, IKBKE, TRAF1, and BCL10. Acts as an important regulator of innate immune signaling via regulation of Toll-like receptors (TLRs), Nodlike receptors (NLRs) and RIG-I like receptors (RLRs), collectively referred to as pattern recognition receptors (PRRs). Protects cells from spontaneous formation of the ripoptosome, a large multi-protein complex that has the capability to kill cancer cells in a caspase-dependent and caspase-independent manner. Suppresses ripoptosome formation by ubiquitinating RIPK1 and CASP8. The chain is Baculoviral IAP repeat-containing protein 3 (BIRC3) from Homo sapiens (Human).